Consider the following 362-residue polypeptide: Tyrosyl-DNA phosphodiesterase 2 (362 aa).

M1 carries the N-acetylmethionine modification. The tract at residues 1 to 20 (MELGSCLEGGREAAEEEGEP) is disordered. Glycyl lysine isopeptide (Lys-Gly) (interchain with G-Cter in SUMO2) cross-links involve residues K23 and K82. Residues 87 to 109 (LTNEETTDSTTSKISPSEDTQQE) are disordered. Residues T88 and T92 each carry the phosphothreonine; by ACVR1B modification. Residues 94-109 (DSTTSKISPSEDTQQE) are compositionally biased toward polar residues. S95 bears the Phosphoserine mark. The interval 120 to 124 (NIDGL) is interaction with 5' end of substrate DNA. The Mg(2+) site is built by D122 and E152. An interaction with 5' end of substrate DNA region spans residues 226–231 (HLESTR). D262 serves as the catalytic Proton donor/acceptor. Positions 264 to 266 (NLR) are interaction with 5' end of substrate DNA.

Belongs to the CCR4/nocturin family. In terms of assembly, interacts with TRAF2, TRAF3, TRAF5, TRAF6, TNFRSF8/CD30, TNFRSF5/CD40, TNFRSF1B/TNF-R75, ETS1, ETS2, FLI1, SMAD3 and ACVR1B/ALK4. (Microbial infection) Interacts with Hantaan hantavirus nucleoprotein. As to quaternary structure, (Microbial infection) Interacts with Seoul hantavirus nucleoprotein. Mg(2+) is required as a cofactor. Requires Mn(2+) as cofactor. Post-translationally, ubiquitinated by TRAF6. Widely expressed. Highly expressed in various brain regions, including the frontal and occipital lobes, the hippocampus, the striatum and the cerebellum.

The protein localises to the nucleus. It is found in the PML body. It localises to the nucleolus. Its subcellular location is the cytoplasm. In terms of biological role, DNA repair enzyme that can remove a variety of covalent adducts from DNA through hydrolysis of a 5'-phosphodiester bond, giving rise to DNA with a free 5' phosphate. Catalyzes the hydrolysis of dead-end complexes between DNA and the topoisomerase 2 (TOP2) active site tyrosine residue. The 5'-tyrosyl DNA phosphodiesterase activity can enable the repair of TOP2-induced DNA double-strand breaks/DSBs without the need for nuclease activity, creating a 'clean' DSB with 5'-phosphate termini that are ready for ligation. Thereby, protects the transcription of many genes involved in neurological development and maintenance from the abortive activity of TOP2. Hydrolyzes 5'-phosphoglycolates on protruding 5' ends on DSBs due to DNA damage by radiation and free radicals. Has preference for single-stranded DNA or duplex DNA with a 4 base pair overhang as substrate. Acts as a regulator of ribosome biogenesis following stress. Also has 3'-tyrosyl DNA phosphodiesterase activity, but less efficiently and much slower than TDP1. Constitutes the major if not only 5'-tyrosyl-DNA phosphodiesterase in cells. Also acts as an adapter by participating in the specific activation of MAP3K7/TAK1 in response to TGF-beta: associates with components of the TGF-beta receptor-TRAF6-TAK1 signaling module and promotes their ubiquitination dependent complex formation. Involved in non-canonical TGF-beta induced signaling routes. May also act as a negative regulator of ETS1 and may inhibit NF-kappa-B activation. Functionally, (Microbial infection) Used by picornaviruses to remove the small polypeptide, VPg (virus Protein genome-linked, the primer for viral RNA synthesis), from the genomic RNA of the virus. Acts as a 5'-tyrosyl RNA phosphodiesterase and cleaves the covalent VPg-Tyr-RNA bond. This cleavage would play a role in viral replication and occur in viral replication vesicles, but would not act on viral mRNA. This is Tyrosyl-DNA phosphodiesterase 2 from Homo sapiens (Human).